A 460-amino-acid chain; its full sequence is ATP synthase subunit beta (460 aa).

An ATP-binding site is contributed by 150–157 (GGAGVGKT).

This sequence belongs to the ATPase alpha/beta chains family. F-type ATPases have 2 components, CF(1) - the catalytic core - and CF(0) - the membrane proton channel. CF(1) has five subunits: alpha(3), beta(3), gamma(1), delta(1), epsilon(1). CF(0) has three main subunits: a(1), b(2) and c(9-12). The alpha and beta chains form an alternating ring which encloses part of the gamma chain. CF(1) is attached to CF(0) by a central stalk formed by the gamma and epsilon chains, while a peripheral stalk is formed by the delta and b chains.

Its subcellular location is the cell inner membrane. It catalyses the reaction ATP + H2O + 4 H(+)(in) = ADP + phosphate + 5 H(+)(out). Produces ATP from ADP in the presence of a proton gradient across the membrane. The catalytic sites are hosted primarily by the beta subunits. This chain is ATP synthase subunit beta, found in Klebsiella pneumoniae subsp. pneumoniae (strain ATCC 700721 / MGH 78578).